We begin with the raw amino-acid sequence, 101 residues long: Small ribosomal subunit protein uS14 (101 aa).

It belongs to the universal ribosomal protein uS14 family. Part of the 30S ribosomal subunit. Contacts proteins S3 and S10.

Its function is as follows. Binds 16S rRNA, required for the assembly of 30S particles and may also be responsible for determining the conformation of the 16S rRNA at the A site. The sequence is that of Small ribosomal subunit protein uS14 from Pseudomonas aeruginosa (strain LESB58).